A 234-amino-acid chain; its full sequence is tRNA1(Val) (adenine(37)-N6)-methyltransferase (234 aa).

The protein belongs to the methyltransferase superfamily. tRNA (adenine-N(6)-)-methyltransferase family.

Its subcellular location is the cytoplasm. It carries out the reaction adenosine(37) in tRNA1(Val) + S-adenosyl-L-methionine = N(6)-methyladenosine(37) in tRNA1(Val) + S-adenosyl-L-homocysteine + H(+). Specifically methylates the adenine in position 37 of tRNA(1)(Val) (anticodon cmo5UAC). The protein is tRNA1(Val) (adenine(37)-N6)-methyltransferase of Phocaeicola vulgatus (strain ATCC 8482 / DSM 1447 / JCM 5826 / CCUG 4940 / NBRC 14291 / NCTC 11154) (Bacteroides vulgatus).